The primary structure comprises 62 residues: uncharacterized protein (62 aa).

This is an uncharacterized protein from Homo sapiens (Human).